A 284-amino-acid chain; its full sequence is 3-methyl-2-oxobutanoate hydroxymethyltransferase (284 aa).

The Mg(2+) site is built by Asp-44 and Asp-83. 3-methyl-2-oxobutanoate-binding positions include 44-45 (DS), Asp-83, and Lys-112. Glu-114 is a Mg(2+) binding site. The Proton acceptor role is filled by Glu-181.

This sequence belongs to the PanB family. Homodecamer; pentamer of dimers. Mg(2+) is required as a cofactor.

It is found in the cytoplasm. It carries out the reaction 3-methyl-2-oxobutanoate + (6R)-5,10-methylene-5,6,7,8-tetrahydrofolate + H2O = 2-dehydropantoate + (6S)-5,6,7,8-tetrahydrofolate. The protein operates within cofactor biosynthesis; coenzyme A biosynthesis. Neither activated nor inhibited by coenzyme A. Functionally, catalyzes the reversible reaction in which hydroxymethyl group from 5,10-methylenetetrahydrofolate is transferred onto alpha-ketoisovalerate to form ketopantoate. The sequence is that of 3-methyl-2-oxobutanoate hydroxymethyltransferase from Thermococcus kodakarensis (strain ATCC BAA-918 / JCM 12380 / KOD1) (Pyrococcus kodakaraensis (strain KOD1)).